Consider the following 480-residue polypeptide: RuvB-like helicase 2 (480 aa).

76–83 provides a ligand contact to ATP; the sequence is GPPSTGKT.

This sequence belongs to the RuvB family. In terms of assembly, may form heterododecamers with RVB1. Component of the SWR1 chromatin remodeling complex, the INO80 chromatin remodeling complex, and of the R2TP complex.

It is found in the nucleus. It carries out the reaction ATP + H2O = ADP + phosphate + H(+). Its function is as follows. DNA helicase which participates in several chromatin remodeling complexes, including the SWR1 and the INO80 complexes. The SWR1 complex mediates the ATP-dependent exchange of histone H2A for the H2A variant HZT1 leading to transcriptional regulation of selected genes by chromatin remodeling. The INO80 complex remodels chromatin by shifting nucleosomes and is involved in DNA repair. Also involved in pre-rRNA processing. The sequence is that of RuvB-like helicase 2 (RVB2) from Debaryomyces hansenii (strain ATCC 36239 / CBS 767 / BCRC 21394 / JCM 1990 / NBRC 0083 / IGC 2968) (Yeast).